We begin with the raw amino-acid sequence, 218 residues long: Ras-related protein RABA1h (218 aa).

20-27 is a GTP binding site; sequence GDSGVGKS. The Effector region motif lies at 42–50; the sequence is SRSTIGVEF. Residues 68–72, 126–129, and 156–157 contribute to the GTP site; these read DTAGQ, NKAD, and SA. Residues C215 and C216 are each lipidated (S-geranylgeranyl cysteine).

This sequence belongs to the small GTPase superfamily. Rab family.

It is found in the cell membrane. In terms of biological role, intracellular vesicle trafficking and protein transport. In Arabidopsis thaliana (Mouse-ear cress), this protein is Ras-related protein RABA1h (RABA1H).